The chain runs to 328 residues: Tetraacyldisaccharide 4'-kinase (328 aa).

55-62 is an ATP binding site; the sequence is TAGGNGKT.

It belongs to the LpxK family.

It catalyses the reaction a lipid A disaccharide + ATP = a lipid IVA + ADP + H(+). The protein operates within glycolipid biosynthesis; lipid IV(A) biosynthesis; lipid IV(A) from (3R)-3-hydroxytetradecanoyl-[acyl-carrier-protein] and UDP-N-acetyl-alpha-D-glucosamine: step 6/6. Transfers the gamma-phosphate of ATP to the 4'-position of a tetraacyldisaccharide 1-phosphate intermediate (termed DS-1-P) to form tetraacyldisaccharide 1,4'-bis-phosphate (lipid IVA). The chain is Tetraacyldisaccharide 4'-kinase from Shigella boydii serotype 18 (strain CDC 3083-94 / BS512).